A 339-amino-acid chain; its full sequence is Anthranilate phosphoribosyltransferase (339 aa).

5-phospho-alpha-D-ribose 1-diphosphate contacts are provided by residues G81, 84-85 (GD), S89, 91-94 (NVST), 109-117 (KHGNRALSS), and A121. G81 is an anthranilate binding site. S93 lines the Mg(2+) pocket. Position 112 (N112) interacts with anthranilate. An anthranilate-binding site is contributed by R167. Mg(2+)-binding residues include D226 and E227.

It belongs to the anthranilate phosphoribosyltransferase family. Homodimer. Mg(2+) is required as a cofactor.

The catalysed reaction is N-(5-phospho-beta-D-ribosyl)anthranilate + diphosphate = 5-phospho-alpha-D-ribose 1-diphosphate + anthranilate. It participates in amino-acid biosynthesis; L-tryptophan biosynthesis; L-tryptophan from chorismate: step 2/5. Its function is as follows. Catalyzes the transfer of the phosphoribosyl group of 5-phosphorylribose-1-pyrophosphate (PRPP) to anthranilate to yield N-(5'-phosphoribosyl)-anthranilate (PRA). The polypeptide is Anthranilate phosphoribosyltransferase (Rhodopseudomonas palustris (strain BisA53)).